The primary structure comprises 100 residues: Co-chaperonin GroES (100 aa).

This sequence belongs to the GroES chaperonin family. In terms of assembly, heptamer of 7 subunits arranged in a ring. Interacts with the chaperonin GroEL.

The protein resides in the cytoplasm. In terms of biological role, together with the chaperonin GroEL, plays an essential role in assisting protein folding. The GroEL-GroES system forms a nano-cage that allows encapsulation of the non-native substrate proteins and provides a physical environment optimized to promote and accelerate protein folding. GroES binds to the apical surface of the GroEL ring, thereby capping the opening of the GroEL channel. The sequence is that of Co-chaperonin GroES from Mycolicibacterium paratuberculosis (strain ATCC BAA-968 / K-10) (Mycobacterium paratuberculosis).